The sequence spans 403 residues: Aminomethyltransferase, mitochondrial (403 aa).

The N-terminal 28 residues, 1-28 (MHRIVSVVAPLGFRLQAQPLVQSRPLSS), are a transit peptide targeting the mitochondrion. Substrate-binding residues include Glu232 and Arg261. Residue Lys368 is modified to N6-succinyllysine. Residue Tyr399 coordinates substrate.

The protein belongs to the GcvT family. The glycine cleavage system is composed of four proteins: P, T, L and H.

The protein localises to the mitochondrion. The enzyme catalyses N(6)-[(R)-S(8)-aminomethyldihydrolipoyl]-L-lysyl-[protein] + (6S)-5,6,7,8-tetrahydrofolate = N(6)-[(R)-dihydrolipoyl]-L-lysyl-[protein] + (6R)-5,10-methylene-5,6,7,8-tetrahydrofolate + NH4(+). The glycine cleavage system catalyzes the degradation of glycine. The chain is Aminomethyltransferase, mitochondrial from Mus musculus (Mouse).